Consider the following 578-residue polypeptide: Ketol-acid reductoisomerase, chloroplastic (578 aa).

The transit peptide at 1–52 directs the protein to the chloroplast; it reads MAASTTLALSHPKTLAAAAAAAPKAPTAPAAVSFPVSHAACAPLAARRRAVT. Positions 90 to 288 constitute a KARI N-terminal Rossmann domain; sequence VRGGRNLFPL…ALGSPFTFAT (199 aa). NADP(+) is bound by residues 111-118, 144-149, and 183-187; these read GVIGWGSQ, RKGSKS, and SDAAQ. The active site involves His-208. KARI C-terminal knotted domains are found at residues 289-437 and 438-574; these read TLEQ…RPEN and DLGP…RPEL. Asp-297, Glu-301, Glu-474, and Glu-478 together coordinate Mg(2+). Substrate is bound at residue Ser-500.

It belongs to the ketol-acid reductoisomerase family. As to quaternary structure, homodimer. Mg(2+) is required as a cofactor.

The protein resides in the plastid. It localises to the chloroplast. It catalyses the reaction (2R)-2,3-dihydroxy-3-methylbutanoate + NADP(+) = (2S)-2-acetolactate + NADPH + H(+). It carries out the reaction (2R,3R)-2,3-dihydroxy-3-methylpentanoate + NADP(+) = (S)-2-ethyl-2-hydroxy-3-oxobutanoate + NADPH + H(+). The protein operates within amino-acid biosynthesis; L-isoleucine biosynthesis; L-isoleucine from 2-oxobutanoate: step 2/4. It participates in amino-acid biosynthesis; L-valine biosynthesis; L-valine from pyruvate: step 2/4. The polypeptide is Ketol-acid reductoisomerase, chloroplastic (Oryza sativa subsp. japonica (Rice)).